The following is a 373-amino-acid chain: Plasmepsin VIII (373 aa).

Residues 1–21 (MNKFFVFPLLLILNSIVLVKS) form the signal peptide. Positions 50–370 (FIGEISIGNP…EKDNMRIGLA (321 aa)) constitute a Peptidase A1 domain. Residues Asp-68 and Asp-258 contribute to the active site.

Belongs to the peptidase A1 family.

During the development in the mosquito vector, plays an essential role in sporozoite egress from the oocyst and sporozoite gliding motility, which is required for the invasion of salivary glands and subsequent transmission to the host. The polypeptide is Plasmepsin VIII (Plasmodium berghei (strain Anka)).